Consider the following 73-residue polypeptide: Ocellatin-PT8 (73 aa).

Positions Met1–Cys22 are cleaved as a signal peptide. Positions Asp23–Glu39 are excised as a propeptide.

Expressed by the skin glands.

It is found in the secreted. Has antibacterial activity against Gram-negative bacteria E.coli ATCC 25922 (MIC=60 uM), K.pneumoniae ATCC 700603 (MIC=240 uM) and S.choleraesuis ATCC 14028 (MIC=240 uM) and against Gram-positive bacterium S.aureus ATCC 29313 (MIC=240 uM). Shows no hemolytic activity and no cytotoxicity. The sequence is that of Ocellatin-PT8 from Leptodactylus pustulatus (Ceara white-lipped frog).